The primary structure comprises 341 residues: Uroporphyrinogen decarboxylase (341 aa).

Substrate-binding positions include 23–27 (RQAGR), Asp-73, Tyr-148, Ser-203, and His-318.

Belongs to the uroporphyrinogen decarboxylase family. In terms of assembly, homodimer.

The protein localises to the cytoplasm. It carries out the reaction uroporphyrinogen III + 4 H(+) = coproporphyrinogen III + 4 CO2. The protein operates within porphyrin-containing compound metabolism; protoporphyrin-IX biosynthesis; coproporphyrinogen-III from 5-aminolevulinate: step 4/4. In terms of biological role, catalyzes the decarboxylation of four acetate groups of uroporphyrinogen-III to yield coproporphyrinogen-III. This is Uroporphyrinogen decarboxylase from Brucella ovis (strain ATCC 25840 / 63/290 / NCTC 10512).